We begin with the raw amino-acid sequence, 79 residues long: Short neurotoxin 4 (79 aa).

The signal sequence occupies residues 1–21 (MKTLLLTLVMVTIMCLDLGYT). Disulfide bonds link Cys-24/Cys-41, Cys-34/Cys-59, and Cys-63/Cys-71.

The protein belongs to the three-finger toxin family. Short-chain subfamily. Type III alpha-neurotoxin sub-subfamily. In terms of tissue distribution, expressed by the venom gland.

The protein localises to the secreted. Functionally, binds with high affinity to muscle nicotinic acetylcholine receptor (nAChR) and hinders acetylcholine binding to the receptor, thereby impairing neuromuscular transmission. Causes muscle paralysis, spasms and increased respiration. The polypeptide is Short neurotoxin 4 (Pseudonaja textilis (Eastern brown snake)).